The chain runs to 376 residues: Phytanoyl-CoA hydroxylase-interacting protein-like (376 aa).

A phosphoserine mark is found at Ser12 and Ser15. N-linked (GlcNAc...) asparagine glycosylation occurs at Asn23. Ser25 is subject to Phosphoserine. N-linked (GlcNAc...) asparagine glycosylation is present at Asn37. In terms of domain architecture, Fibronectin type-III spans 52 to 161 (VPHNIKISNI…EIIEFCTADY (110 aa)).

The protein belongs to the PHYHIP family.

May play a role in the development of the central system. This Homo sapiens (Human) protein is Phytanoyl-CoA hydroxylase-interacting protein-like (PHYHIPL).